Reading from the N-terminus, the 278-residue chain is Polyamine aminopropyltransferase (278 aa).

In terms of domain architecture, PABS spans 5 to 238 (ELWFTEQQTP…GLWSFTLGSK (234 aa)). Gln-34 is an S-methyl-5'-thioadenosine binding site. 2 residues coordinate spermidine: His-65 and Asp-89. Residues Glu-109 and 140–141 (DG) contribute to the S-methyl-5'-thioadenosine site. Asp-158 (proton acceptor) is an active-site residue. 158-161 (DSTD) serves as a coordination point for spermidine. Pro-165 contributes to the S-methyl-5'-thioadenosine binding site.

It belongs to the spermidine/spermine synthase family. As to quaternary structure, homodimer or homotetramer.

It is found in the cytoplasm. The enzyme catalyses S-adenosyl 3-(methylsulfanyl)propylamine + putrescine = S-methyl-5'-thioadenosine + spermidine + H(+). It participates in amine and polyamine biosynthesis; spermidine biosynthesis; spermidine from putrescine: step 1/1. Catalyzes the irreversible transfer of a propylamine group from the amino donor S-adenosylmethioninamine (decarboxy-AdoMet) to putrescine (1,4-diaminobutane) to yield spermidine. This is Polyamine aminopropyltransferase from Caldicellulosiruptor bescii (strain ATCC BAA-1888 / DSM 6725 / KCTC 15123 / Z-1320) (Anaerocellum thermophilum).